Reading from the N-terminus, the 3411-residue chain is Genome polyprotein (3411 aa).

Topologically, residues 1–104 are cytoplasmic; the sequence is MSGRKAQGKT…LSSRKRRSHD (104 aa). The tract at residues 38–72 is hydrophobic; homodimerization of capsid protein C; sequence PGPSRGVQGFIFFFLFNILTGKKITAHLKRLWKML. A propeptide spans 102–121 (ER anchor for the capsid protein C, removed in mature form by serine protease NS3); sequence SHDVLTVQFLILGMLLMTGG. Residues 105–125 traverse the membrane as a helical segment; that stretch reads VLTVQFLILGMLLMTGGVTLV. Topologically, residues 126–244 are extracellular; the sequence is RKNRWLLLNV…GERQLQKIER (119 aa). N-linked (GlcNAc...) asparagine; by host glycosylation is found at Asn-134 and Asn-150. Residues 245–265 form a helical membrane-spanning segment; it reads WFVRNPFFAVTALTIAYLVGS. Topologically, residues 266-270 are cytoplasmic; that stretch reads NMTQR. The helical transmembrane segment at 271–285 threads the bilayer; the sequence is VVIALLVLAVGPAYS. Residues 286-730 are Extracellular-facing; that stretch reads AHCIGITDRD…TVFGSAFQGL (445 aa). 8 disulfide bridges follow: Cys-288–Cys-315, Cys-345–Cys-401, Cys-345–Cys-406, Cys-359–Cys-390, Cys-377–Cys-401, Cys-377–Cys-406, Cys-467–Cys-568, and Cys-585–Cys-615. Positions 383 to 396 are fusion peptide; the sequence is DRGWGNGCGLFGKG. The chain crosses the membrane as a helical span at residues 731–751; that stretch reads FGGLNWITKVIMGAVLIWVGI. Residues 752-757 are Extracellular-facing; it reads NTRNMT. The chain crosses the membrane as a helical span at residues 758–778; sequence MSMSMILVGVIMMFLSLGVGA. Residues 779-1132 are Extracellular-facing; it reads DQGCAINFGK…LVRSWVTAGE (354 aa). 6 disulfides stabilise this stretch: Cys-782/Cys-793, Cys-833/Cys-921, Cys-957/Cys-1002, Cys-1058/Cys-1107, Cys-1069/Cys-1091, and Cys-1090/Cys-1094. Asn-908 and Asn-986 each carry an N-linked (GlcNAc...) asparagine; by host glycan. A helical transmembrane segment spans residues 1133–1153; sequence IHAVPFGLVSMMIAMEVVLRK. Topologically, residues 1154–1201 are cytoplasmic; sequence RQGPKQMLVGGVVLLGAMLVGQVTLLDLLKLTVAVGLHFHEMNNGGDA. The chain crosses the membrane as a helical span at residues 1202-1222; it reads MYMALIAAFSIRPGLLIGFGL. Residues 1223-1287 lie on the Lumenal side of the membrane; it reads RTLWSPRERL…ILPLMALLTP (65 aa). A helical membrane pass occupies residues 1288 to 1308; that stretch reads VTMAEVRLAAMFFCAVVIIGV. Topologically, residues 1309–1355 are cytoplasmic; the sequence is LHQNFKDTSMQKTIPLVALTLTSYLGLTQPFLGLCAFLATRIFGRRS. The chain crosses the membrane as a helical span at residues 1356 to 1376; it reads IPVNEALAAAGLVGVLAGLAF. The Lumenal segment spans residues 1377–1378; sequence QE. A helical transmembrane segment spans residues 1379–1399; sequence MENFLGPIAVGGLLMMLVSVA. The Cytoplasmic segment spans residues 1400–1456; that stretch reads GRVDGLELKKLGEVSWEEEAEISGSSARYDVALSEQGEFKLLSEEKVPWDQVVMTSL. The segment at 1407–1446 is interacts with and activates NS3 protease; it reads LKKLGEVSWEEEAEISGSSARYDVALSEQGEFKLLSEEKV. The segment at residues 1457 to 1477 is an intramembrane region (helical); the sequence is ALVGAALHPFALLLVLAGWLF. Topologically, residues 1478 to 2157 are cytoplasmic; that stretch reads HVRGARRSGD…RNALSMMPEA (680 aa). Residues 1485–1665 form the Peptidase S7 domain; it reads SGDVLWDIPT…EVKEEGKEEL (181 aa). Residues His-1537, Asp-1561, and Ser-1622 each act as charge relay system; for serine protease NS3 activity in the active site. Residues 1669–1825 enclose the Helicase ATP-binding domain; it reads PTMLKKGMTT…HSNGEIEDVQ (157 aa). Residues 1673–1676 form an important for RNA-binding region; that stretch reads KKGM. Position 1682 to 1689 (1682 to 1689) interacts with ATP; it reads FHPGAGKT. The short motif at 1773–1776 is the DEAH box element; that stretch reads DEAH. The Helicase C-terminal domain occupies 1820–1997; that stretch reads EIEDVQTDIP…VRGGMVAPLY (178 aa). Lys-1877 carries the post-translational modification N6-acetyllysine; by host. A helical transmembrane segment spans residues 2158–2178; that stretch reads MTIVMLFILAGLLTSGMVIFF. Residues 2179–2186 are Lumenal-facing; that stretch reads MSPKGISR. Positions 2187-2207 form an intramembrane region, helical; sequence MSMAMGTMAGCGYLMFLGGVK. At 2208 to 2209 the chain is on the lumenal side; sequence PT. A helical membrane pass occupies residues 2210-2230; it reads HISYVMLIFFVLMVVVIPEPG. Topologically, residues 2231 to 2241 are cytoplasmic; it reads QQRSIQDNQVA. The chain crosses the membrane as a helical span at residues 2242-2262; that stretch reads YLIIGILTLVSAVAANELGML. The Lumenal portion of the chain corresponds to 2263 to 2293; it reads EKTKEDLFGKKNLIPSSASPWSWPDLDLKPG. Positions 2294 to 2314 form an intramembrane region, helical; that stretch reads AAWTVYVGIVTMLSPMLHHWI. Residues 2315 to 2360 are Lumenal-facing; sequence KVEYGNLSLSGIAQSASVLSFMDKGIPFMKMNISVIMLLVSGWNSI. Residues 2361–2381 traverse the membrane as a helical segment; the sequence is TVMPLLCGIGCAMLHWSLILP. The Cytoplasmic portion of the chain corresponds to 2382-2421; it reads GIKAQQSKLAQRRVFHGVAENPVVDGNPTVDIEEAPEMPA. The helical transmembrane segment at 2422-2442 threads the bilayer; the sequence is LYEKKLALYLLLALSLASVAM. Topologically, residues 2443–2445 are lumenal; sequence CRT. The helical transmembrane segment at 2446–2466 threads the bilayer; sequence PFSLAEGIVLASAALGPLIEG. Over 2467 to 3411 the chain is Cytoplasmic; it reads NTSLLWNGPM…DADLQLGELI (945 aa). One can recognise an mRNA cap 0-1 NS5-type MT domain in the interval 2507–2771; the sequence is GSANGKTLGE…DVILPIGTRS (265 aa). Ser-2562 contributes to the S-adenosyl-L-methionine binding site. The residue at position 2562 (Ser-2562) is a Phosphoserine. Lys-2567 functions as the For 2'-O-MTase activity in the catalytic mechanism. Residues Gly-2592, Trp-2593, Thr-2610, Leu-2611, Asp-2637, and Ile-2638 each coordinate S-adenosyl-L-methionine. The active-site For 2'-O-MTase activity is the Asp-2652. Ile-2653 is a binding site for S-adenosyl-L-methionine. Active-site for 2'-O-MTase activity residues include Lys-2688 and Glu-2724. Position 2726 (Tyr-2726) interacts with S-adenosyl-L-methionine. Positions 2878–2911 match the Nuclear localization signal motif; the sequence is RKIMKVVNRWLFRHLAREKNPRLCTKEEFIAKVR. 4 residues coordinate Zn(2+): Glu-2945, His-2949, Cys-2954, and Cys-2957. The RdRp catalytic domain maps to 3035-3187; it reads GGFYADDTAG…RPIDDRFGLA (153 aa). The Zn(2+) site is built by His-3222, Cys-3238, and Cys-3357.

The protein in the N-terminal section; belongs to the class I-like SAM-binding methyltransferase superfamily. mRNA cap 0-1 NS5-type methyltransferase family. In terms of assembly, homodimer. Interacts (via N-terminus) with host EXOC1 (via C-terminus); this interaction results in EXOC1 degradation through the proteasome degradation pathway. Forms heterodimers with envelope protein E in the endoplasmic reticulum and Golgi. As to quaternary structure, homodimer; in the endoplasmic reticulum and Golgi. Interacts with protein prM. Interacts with non-structural protein 1. In terms of assembly, homodimer; Homohexamer when secreted. Interacts with envelope protein E. Interacts (via N-terminus) with serine protease NS3. As to quaternary structure, forms a heterodimer with serine protease NS3. May form homooligomers. In terms of assembly, forms a heterodimer with NS2B. Interacts with non-structural protein 2A (via N-terminus). Interacts with NS4B. Interacts with unphosphorylated RNA-directed RNA polymerase NS5; this interaction stimulates RNA-directed RNA polymerase NS5 guanylyltransferase activity. NS3 interacts with host PDCD6IP; this interaction contributes to virion release. Interacts with serine protease NS3. As to quaternary structure, homodimer. Interacts with host STAT2; this interaction prevents the establishment of cellular antiviral state. Interacts with serine protease NS3. Interacts with host TRIM23; this interaction leads to NS5 ubiquitination. Post-translationally, specific enzymatic cleavages in vivo yield mature proteins. The nascent capsid protein C contains a C-terminal hydrophobic domain that act as a signal sequence for translocation of prM into the lumen of the ER. Mature capsid protein C is cleaved at a site upstream of this hydrophobic domain by NS3. prM is cleaved in post-Golgi vesicles by a host furin, releasing the mature small envelope protein M, and peptide pr. Non-structural protein 2A-alpha, a C-terminally truncated form of non-structural protein 2A, results from partial cleavage by NS3. Specific enzymatic cleavages in vivo yield mature proteins peptide 2K acts as a signal sequence and is removed from the N-terminus of NS4B by the host signal peptidase in the ER lumen. Signal cleavage at the 2K-4B site requires a prior NS3 protease-mediated cleavage at the 4A-2K site. In terms of processing, cleaved in post-Golgi vesicles by a host furin, releasing the mature small envelope protein M, and peptide pr. This cleavage is incomplete as up to 30% of viral particles still carry uncleaved prM. N-glycosylated. Post-translationally, N-glycosylated. The excreted form is glycosylated and this is required for efficient secretion of the protein from infected cells. In terms of processing, polyubiquitinated; ubiquitination is probably mediated by host TRIM23 and is prerequisite for NS5-STAT2 interaction. NS5 is not ISGylated or sumoylated. Acetylated by host KAT5. Acetylation modulates NS3 RNA-binding and unwinding activities and plays an important positive role for viral replication. Post-translationally, phosphorylated on serines residues. This phosphorylation may trigger NS5 nuclear localization.

The protein resides in the virion. It localises to the host nucleus. Its subcellular location is the host cytoplasm. The protein localises to the host perinuclear region. It is found in the secreted. The protein resides in the virion membrane. It localises to the host endoplasmic reticulum membrane. The catalysed reaction is Selective hydrolysis of -Xaa-Xaa-|-Yaa- bonds in which each of the Xaa can be either Arg or Lys and Yaa can be either Ser or Ala.. It carries out the reaction RNA(n) + a ribonucleoside 5'-triphosphate = RNA(n+1) + diphosphate. It catalyses the reaction a ribonucleoside 5'-triphosphate + H2O = a ribonucleoside 5'-diphosphate + phosphate + H(+). The enzyme catalyses ATP + H2O = ADP + phosphate + H(+). The catalysed reaction is a 5'-end (5'-triphosphoguanosine)-ribonucleoside in mRNA + S-adenosyl-L-methionine = a 5'-end (N(7)-methyl 5'-triphosphoguanosine)-ribonucleoside in mRNA + S-adenosyl-L-homocysteine. It carries out the reaction a 5'-end (N(7)-methyl 5'-triphosphoguanosine)-ribonucleoside in mRNA + S-adenosyl-L-methionine = a 5'-end (N(7)-methyl 5'-triphosphoguanosine)-(2'-O-methyl-ribonucleoside) in mRNA + S-adenosyl-L-homocysteine + H(+). Its function is as follows. Plays a role in virus budding by binding to the cell membrane and gathering the viral RNA into a nucleocapsid that forms the core of a mature virus particle. During virus entry, may induce genome penetration into the host cytoplasm after hemifusion induced by the surface proteins. Can migrate to the cell nucleus where it modulates host functions. In terms of biological role, inhibits RNA silencing by interfering with host Dicer. Prevents premature fusion activity of envelope proteins in trans-Golgi by binding to envelope protein E at pH6.0. After virion release in extracellular space, gets dissociated from E dimers. Functionally, acts as a chaperone for envelope protein E during intracellular virion assembly by masking and inactivating envelope protein E fusion peptide. prM is the only viral peptide matured by host furin in the trans-Golgi network probably to avoid catastrophic activation of the viral fusion activity in acidic Golgi compartment prior to virion release. prM-E cleavage is inefficient, and many virions are only partially matured. These uncleaved prM would play a role in immune evasion. Its function is as follows. May play a role in virus budding. Exerts cytotoxic effects by activating a mitochondrial apoptotic pathway through M ectodomain. May display a viroporin activity. In terms of biological role, binds to host cell surface receptor and mediates fusion between viral and cellular membranes. Envelope protein is synthesized in the endoplasmic reticulum in the form of heterodimer with protein prM. They play a role in virion budding in the ER, and the newly formed immature particle is covered with 60 spikes composed of heterodimer between precursor prM and envelope protein E. The virion is transported to the Golgi apparatus where the low pH causes dissociation of PrM-E heterodimers and formation of E homodimers. prM-E cleavage is inefficient, and many virions are only partially matured. These uncleaved prM would play a role in immune evasion. Involved in immune evasion, pathogenesis and viral replication. Once cleaved off the polyprotein, is targeted to three destinations: the viral replication cycle, the plasma membrane and the extracellular compartment. Essential for viral replication. Required for formation of the replication complex and recruitment of other non-structural proteins to the ER-derived membrane structures. Excreted as a hexameric lipoparticle that plays a role against host immune response. Antagonizing the complement function. Binds to the host macrophages and dendritic cells. Inhibits signal transduction originating from Toll-like receptor 3 (TLR3). Functionally, component of the viral RNA replication complex that functions in virion assembly and antagonizes the host immune response. Its function is as follows. Required cofactor for the serine protease function of NS3. May have membrane-destabilizing activity and form viroporins. In terms of biological role, displays three enzymatic activities: serine protease, NTPase and RNA helicase. NS3 serine protease, in association with NS2B, performs its autocleavage and cleaves the polyprotein at dibasic sites in the cytoplasm: C-prM, NS2A-NS2B, NS2B-NS3, NS3-NS4A, NS4A-2K and NS4B-NS5. NS3 RNA helicase binds RNA and unwinds dsRNA in the 3' to 5' direction. Also plays a role in virus assembly. Regulates the ATPase activity of the NS3 helicase activity. NS4A allows NS3 helicase to conserve energy during unwinding. Functionally, functions as a signal peptide for NS4B and is required for the interferon antagonism activity of the latter. Its function is as follows. Induces the formation of ER-derived membrane vesicles where the viral replication takes place. Inhibits interferon (IFN)-induced host STAT1 phosphorylation and nuclear translocation, thereby preventing the establishment of cellular antiviral state by blocking the IFN-alpha/beta pathway. In terms of biological role, replicates the viral (+) and (-) RNA genome, and performs the capping of genomes in the cytoplasm. NS5 methylates viral RNA cap at guanine N-7 and ribose 2'-O positions. Besides its role in RNA genome replication, also prevents the establishment of cellular antiviral state by blocking the interferon-alpha/beta (IFN-alpha/beta) signaling pathway. IFN-I induces binding of NS5 to host IFN-activated transcription factor STAT2, preventing its transcriptional activity. Host TRIM23 is the E3 ligase that interacts with and polyubiquitinates NS5 to promote its binding to STAT2 and trigger IFN-I signaling inhibition. In Aedes aegypti (Yellowfever mosquito), this protein is Genome polyprotein.